The primary structure comprises 113 residues: UPF0482 protein KPK_2871 (113 aa).

The signal sequence occupies residues 1–28; sequence MNMTLNKRWCLTAILALSAVVYTSSSFA. The interval 38 to 61 is disordered; sequence GDSAQSRQQASMEKEQWNDTRSLR. Residues 39–48 are compositionally biased toward polar residues; it reads DSAQSRQQAS. Over residues 49-59 the composition is skewed to basic and acidic residues; it reads MEKEQWNDTRS.

The protein belongs to the UPF0482 family.

The sequence is that of UPF0482 protein KPK_2871 from Klebsiella pneumoniae (strain 342).